Consider the following 360-residue polypeptide: Histidinol-phosphate aminotransferase (360 aa).

Residue Lys-221 is modified to N6-(pyridoxal phosphate)lysine.

It belongs to the class-II pyridoxal-phosphate-dependent aminotransferase family. Histidinol-phosphate aminotransferase subfamily. In terms of assembly, homodimer. Pyridoxal 5'-phosphate is required as a cofactor.

It catalyses the reaction L-histidinol phosphate + 2-oxoglutarate = 3-(imidazol-4-yl)-2-oxopropyl phosphate + L-glutamate. It functions in the pathway amino-acid biosynthesis; L-histidine biosynthesis; L-histidine from 5-phospho-alpha-D-ribose 1-diphosphate: step 7/9. In Desulfitobacterium hafniense (strain DSM 10664 / DCB-2), this protein is Histidinol-phosphate aminotransferase.